Consider the following 259-residue polypeptide: Haloacid dehalogenase-like hydrolase domain-containing protein 2 (259 aa).

Mg(2+) contacts are provided by Asp-13 and Asn-15. Substrate is bound by residues 13 to 15 (DLN) and 46 to 47 (TN). Residues 47 to 72 (NTTKESKKDLLERLKKLEFEISEDEI) are a coiled coil. Lys-50 is subject to N6-succinyllysine. Substrate is bound at residue Lys-179. Asp-204 contacts Mg(2+).

This sequence belongs to the HAD-like hydrolase superfamily. Requires Mg(2+) as cofactor.

The protein is Haloacid dehalogenase-like hydrolase domain-containing protein 2 (Hdhd2) of Mus musculus (Mouse).